The primary structure comprises 338 residues: Structural protein VP9 (338 aa).

It localises to the virion. Plays an important role in virus transmission by the insect vector. May participate in the virus stability by binding clamp proteins and surrounding the pentameric turrets present in the virion. The sequence is that of Structural protein VP9 from Rice ragged stunt virus (isolate Thailand) (RRSV).